We begin with the raw amino-acid sequence, 314 residues long: MDGIWIEVSVITKSEALEPISGIFYGLNCPNVAIEDPEDLLSRDQGPLTWDFADINILEHKGNAAVVKAYFSQDDKVEEIVEYVKEKLSEIKEFGIDIGEGTVEAKKMHEEDWANNWKQYYKPVKITDKIVVKPIWEEYEKNDEELIIELDPGMAFGTGTHETTRMCIQALDKYVKPDTTVFDVGCGSGILAIAAAKLGAKHVVGVDLDPVAVDSSKENISFNNLNNIEVLEGNLLDVVDGKADIVVANIIAEIICVLTEDVKKALNEGGLFITSGIIHDRVDMVTEKFAECGFEVIEINKDGEWNCIVAKAIN.

Positions 164, 185, 207, and 249 each coordinate S-adenosyl-L-methionine.

It belongs to the methyltransferase superfamily. PrmA family.

Its subcellular location is the cytoplasm. It catalyses the reaction L-lysyl-[protein] + 3 S-adenosyl-L-methionine = N(6),N(6),N(6)-trimethyl-L-lysyl-[protein] + 3 S-adenosyl-L-homocysteine + 3 H(+). Functionally, methylates ribosomal protein L11. This chain is Ribosomal protein L11 methyltransferase, found in Clostridium beijerinckii (strain ATCC 51743 / NCIMB 8052) (Clostridium acetobutylicum).